Consider the following 207-residue polypeptide: Small ribosomal subunit protein uS4 (207 aa).

Positions 31 to 51 (KCKLDSKPGQHGRTSGARTSD) are disordered. Residues 97–162 (SRLDNVVYRM…QGRIRESLDL (66 aa)) enclose the S4 RNA-binding domain.

It belongs to the universal ribosomal protein uS4 family. Part of the 30S ribosomal subunit. Contacts protein S5. The interaction surface between S4 and S5 is involved in control of translational fidelity.

One of the primary rRNA binding proteins, it binds directly to 16S rRNA where it nucleates assembly of the body of the 30S subunit. Its function is as follows. With S5 and S12 plays an important role in translational accuracy. This Bordetella bronchiseptica (strain ATCC BAA-588 / NCTC 13252 / RB50) (Alcaligenes bronchisepticus) protein is Small ribosomal subunit protein uS4.